The chain runs to 466 residues: Ribulose bisphosphate carboxylase large chain (466 aa).

K5 bears the N6,N6,N6-trimethyllysine mark. Substrate is bound by residues N114 and T164. The active-site Proton acceptor is the K166. K168 lines the substrate pocket. 3 residues coordinate Mg(2+): K192, D194, and E195. K192 is subject to N6-carboxylysine. The Proton acceptor role is filled by H285. Substrate is bound by residues R286, H318, and S370.

The protein belongs to the RuBisCO large chain family. Type I subfamily. In terms of assembly, heterohexadecamer of 8 large chains and 8 small chains; disulfide-linked. The disulfide link is formed within the large subunit homodimers. Mg(2+) serves as cofactor. In terms of processing, the disulfide bond which can form in the large chain dimeric partners within the hexadecamer appears to be associated with oxidative stress and protein turnover.

It localises to the plastid. The protein resides in the chloroplast. It carries out the reaction 2 (2R)-3-phosphoglycerate + 2 H(+) = D-ribulose 1,5-bisphosphate + CO2 + H2O. It catalyses the reaction D-ribulose 1,5-bisphosphate + O2 = 2-phosphoglycolate + (2R)-3-phosphoglycerate + 2 H(+). Functionally, ruBisCO catalyzes two reactions: the carboxylation of D-ribulose 1,5-bisphosphate, the primary event in carbon dioxide fixation, as well as the oxidative fragmentation of the pentose substrate in the photorespiration process. Both reactions occur simultaneously and in competition at the same active site. In Drosera filiformis (Thread-leaved sundew), this protein is Ribulose bisphosphate carboxylase large chain.